The following is a 413-amino-acid chain: S-adenosylmethionine synthase (413 aa).

H15 provides a ligand contact to ATP. Position 17 (D17) interacts with Mg(2+). Position 43 (E43) interacts with K(+). Positions 56 and 100 each coordinate L-methionine. Positions 100–110 are flexible loop; the sequence is QSPDISQGVNE. ATP-binding positions include 171–173, 248–249, D257, 263–264, A280, and K284; these read DGK, KF, and RK. Residue D257 participates in L-methionine binding. K288 serves as a coordination point for L-methionine.

The protein belongs to the AdoMet synthase family. Homotetramer; dimer of dimers. Requires Mg(2+) as cofactor. K(+) is required as a cofactor.

The protein localises to the cytoplasm. The enzyme catalyses L-methionine + ATP + H2O = S-adenosyl-L-methionine + phosphate + diphosphate. The protein operates within amino-acid biosynthesis; S-adenosyl-L-methionine biosynthesis; S-adenosyl-L-methionine from L-methionine: step 1/1. Functionally, catalyzes the formation of S-adenosylmethionine (AdoMet) from methionine and ATP. The overall synthetic reaction is composed of two sequential steps, AdoMet formation and the subsequent tripolyphosphate hydrolysis which occurs prior to release of AdoMet from the enzyme. The polypeptide is S-adenosylmethionine synthase (Prochlorococcus marinus (strain MIT 9215)).